Reading from the N-terminus, the 285-residue chain is Glutamate racemase (285 aa).

Substrate is bound by residues 28-29 and 60-61; these read DS and YG. Cysteine 92 serves as the catalytic Proton donor/acceptor. Position 93-94 (93-94) interacts with substrate; sequence NT. Cysteine 204 acts as the Proton donor/acceptor in catalysis. Residue 205-206 participates in substrate binding; sequence TH.

This sequence belongs to the aspartate/glutamate racemases family.

It catalyses the reaction L-glutamate = D-glutamate. It participates in cell wall biogenesis; peptidoglycan biosynthesis. Its function is as follows. Provides the (R)-glutamate required for cell wall biosynthesis. The polypeptide is Glutamate racemase (Escherichia coli O7:K1 (strain IAI39 / ExPEC)).